A 1168-amino-acid chain; its full sequence is Transcription-repair-coupling factor (1168 aa).

The 162-residue stretch at 633–794 (DMQKSRPMDR…MLGVRDLSVI (162 aa)) folds into the Helicase ATP-binding domain. 646–653 (GDVGYGKT) contacts ATP. The DEEQ box motif lies at 747-750 (DEEQ). The region spanning 808 to 969 (VLEQNMSFIK…GFKIAMRDLN (162 aa)) is the Helicase C-terminal domain.

This sequence in the N-terminal section; belongs to the UvrB family. The protein in the C-terminal section; belongs to the helicase family. RecG subfamily.

It localises to the cytoplasm. In terms of biological role, couples transcription and DNA repair by recognizing RNA polymerase (RNAP) stalled at DNA lesions. Mediates ATP-dependent release of RNAP and its truncated transcript from the DNA, and recruitment of nucleotide excision repair machinery to the damaged site. The chain is Transcription-repair-coupling factor from Staphylococcus aureus (strain USA300).